A 538-amino-acid chain; its full sequence is Calcium-dependent protein kinase 32 (538 aa).

The tract at residues 1-37 is disordered; sequence MGNCCGTAGSLAQNDNKPKKGRKKQNPFSIDYGLHHG. A lipid anchor (N-myristoyl glycine) is attached at G2. The Protein kinase domain maps to 63-321; that stretch reads YTLGRELGRG…AQQVLDHPWL (259 aa). ATP-binding positions include 69–77 and K92; that span reads LGRGEFGVT. The active-site Proton acceptor is the D187. At S227 the chain carries Phosphoserine. An autoinhibitory domain region spans residues 327 to 357; it reads APNVSLGETVRARLKQFTVMNKLKKRALRVI. EF-hand domains are found at residues 364-399, 400-435, 436-470, and 471-506; these read EEAS…LGHA, IPQD…LRKM, GNDE…DELG, and TSEE…GTDW. Residues D377, S379, K383, E388, D413, D415, D417, Y419, E424, D449, N451, N453, Y455, E460, D484, D486, D488, and R490 each coordinate Ca(2+). S492 is subject to Phosphoserine. E495 contributes to the Ca(2+) binding site.

This sequence belongs to the protein kinase superfamily. Ser/Thr protein kinase family. CDPK subfamily. As to quaternary structure, interacts with ABF4. Interacts with CNGC18. In terms of tissue distribution, expressed in embryos and most of the vegetative tissues.

The protein localises to the nucleus. It localises to the membrane. It carries out the reaction L-seryl-[protein] + ATP = O-phospho-L-seryl-[protein] + ADP + H(+). The enzyme catalyses L-threonyl-[protein] + ATP = O-phospho-L-threonyl-[protein] + ADP + H(+). Its activity is regulated as follows. Activated by calcium. Autophosphorylation may play an important role in the regulation of the kinase activity. Its function is as follows. May play a role in signal transduction pathways that involve calcium as a second messenger. Involved in maintaining Ca2+ homeostasis in pollen tube tips by regulating CNGC18. Functions as regulator of the calcium-mediated abscisic acid (ABA) signaling pathway. Phosphorylates ABA-responsive transcription factor ABF4 in vitro. This is Calcium-dependent protein kinase 32 from Arabidopsis thaliana (Mouse-ear cress).